Consider the following 125-residue polypeptide: Large ribosomal subunit protein bL17 (125 aa).

This sequence belongs to the bacterial ribosomal protein bL17 family. Part of the 50S ribosomal subunit. Contacts protein L32.

The chain is Large ribosomal subunit protein bL17 from Syntrophus aciditrophicus (strain SB).